The following is a 309-amino-acid chain: Porphobilinogen deaminase (309 aa).

An S-(dipyrrolylmethanemethyl)cysteine modification is found at C242.

It belongs to the HMBS family. As to quaternary structure, monomer. Requires dipyrromethane as cofactor.

It carries out the reaction 4 porphobilinogen + H2O = hydroxymethylbilane + 4 NH4(+). It functions in the pathway porphyrin-containing compound metabolism; protoporphyrin-IX biosynthesis; coproporphyrinogen-III from 5-aminolevulinate: step 2/4. Tetrapolymerization of the monopyrrole PBG into the hydroxymethylbilane pre-uroporphyrinogen in several discrete steps. In Syntrophobacter fumaroxidans (strain DSM 10017 / MPOB), this protein is Porphobilinogen deaminase.